The primary structure comprises 89 residues: Small ribosomal subunit protein uS17 (89 aa).

It belongs to the universal ribosomal protein uS17 family. As to quaternary structure, part of the 30S ribosomal subunit.

Its function is as follows. One of the primary rRNA binding proteins, it binds specifically to the 5'-end of 16S ribosomal RNA. This chain is Small ribosomal subunit protein uS17, found in Bacteroides fragilis (strain ATCC 25285 / DSM 2151 / CCUG 4856 / JCM 11019 / LMG 10263 / NCTC 9343 / Onslow / VPI 2553 / EN-2).